Here is a 367-residue protein sequence, read N- to C-terminus: Peptide chain release factor 2 (367 aa).

Position 254 is an N5-methylglutamine (Gln-254).

The protein belongs to the prokaryotic/mitochondrial release factor family. Post-translationally, methylated by PrmC. Methylation increases the termination efficiency of RF2.

Its subcellular location is the cytoplasm. In terms of biological role, peptide chain release factor 2 directs the termination of translation in response to the peptide chain termination codons UGA and UAA. The chain is Peptide chain release factor 2 from Leptospira interrogans serogroup Icterohaemorrhagiae serovar copenhageni (strain Fiocruz L1-130).